The following is a 225-amino-acid chain: MVPRGFFITFEGGEGAGKSTQIHLLADRLRREGRDVLTTREPGGSPGAEAIRHVLLSGAAEPFGATLEAILFAAARSDHVEQVIRPAVESGAIVLCDRFLDSSRVYQGVTGGLASDFMAALERVTVNGLIPDLTVILDIDPEEGLRRASERRGKATADRFEKENLEIHRRRREAFLNIAAREPQRCVVIDASRSADAVSENVTEIVLRVIFDRAGLSEPTEAGSV.

12-19 (GGEGAGKS) is a binding site for ATP.

It belongs to the thymidylate kinase family.

It catalyses the reaction dTMP + ATP = dTDP + ADP. Its function is as follows. Phosphorylation of dTMP to form dTDP in both de novo and salvage pathways of dTTP synthesis. This Chelativorans sp. (strain BNC1) protein is Thymidylate kinase.